Consider the following 264-residue polypeptide: Protein-L-isoaspartate O-methyltransferase (264 aa).

The segment at Met-1–Ala-49 is disordered. Positions Pro-24–Thr-35 are enriched in polar residues. The active site involves Ser-112.

The protein belongs to the methyltransferase superfamily. L-isoaspartyl/D-aspartyl protein methyltransferase family.

It is found in the cytoplasm. It catalyses the reaction [protein]-L-isoaspartate + S-adenosyl-L-methionine = [protein]-L-isoaspartate alpha-methyl ester + S-adenosyl-L-homocysteine. Catalyzes the methyl esterification of L-isoaspartyl residues in peptides and proteins that result from spontaneous decomposition of normal L-aspartyl and L-asparaginyl residues. It plays a role in the repair and/or degradation of damaged proteins. In Bordetella avium (strain 197N), this protein is Protein-L-isoaspartate O-methyltransferase.